We begin with the raw amino-acid sequence, 235 residues long: C-type lectin domain family 2 member D-related protein (235 aa).

The tract at residues 1 to 50 is disordered; that stretch reads MPSSAHLQDPPPHLSRTLTQDEEQTSLRQSSSCGPSTTSASASESLSGST. Topologically, residues 1 to 75 are cytoplasmic; the sequence is MPSSAHLQDP…KIIPTESAAK (75 aa). Positions 30 to 50 are enriched in low complexity; that stretch reads SSSCGPSTTSASASESLSGST. A helical; Signal-anchor for type II membrane protein membrane pass occupies residues 76-96; sequence LLCCYAVFMALTVVVIALSIA. The Extracellular segment spans residues 97–235; that stretch reads LSVKKTPQIS…KLNSYTSQCP (139 aa). One can recognise a C-type lectin domain in the interval 121-232; that stretch reads FGNKCYYFNE…ICSKLNSYTS (112 aa). Asn134 carries N-linked (GlcNAc...) asparagine glycosylation.

It localises to the cell membrane. Its function is as follows. Lectin-type cell surface receptor. The chain is C-type lectin domain family 2 member D-related protein from Rattus norvegicus (Rat).